We begin with the raw amino-acid sequence, 201 residues long: Holliday junction resolvase RecU (201 aa).

Mg(2+) is bound by residues Thr85, Asp87, Glu100, and Gln119.

Belongs to the RecU family. Mg(2+) is required as a cofactor.

The protein resides in the cytoplasm. It catalyses the reaction Endonucleolytic cleavage at a junction such as a reciprocal single-stranded crossover between two homologous DNA duplexes (Holliday junction).. Functionally, endonuclease that resolves Holliday junction intermediates in genetic recombination. Cleaves mobile four-strand junctions by introducing symmetrical nicks in paired strands. Promotes annealing of linear ssDNA with homologous dsDNA. Required for DNA repair, homologous recombination and chromosome segregation. This Geobacillus sp. (strain WCH70) protein is Holliday junction resolvase RecU.